The chain runs to 428 residues: UPF0761 membrane protein Ppha_1623 (428 aa).

A run of 6 helical transmembrane segments spans residues 52-72, 108-128, 148-168, 189-209, 216-233, and 252-272; these read LLSI…FVVF, SVPI…ISTV, FTLY…SLAA, LLSF…YMLV, FVHA…FELS, and GALS…IVVL.

This sequence belongs to the UPF0761 family.

It is found in the cell inner membrane. In Pelodictyon phaeoclathratiforme (strain DSM 5477 / BU-1), this protein is UPF0761 membrane protein Ppha_1623.